The following is an 85-amino-acid chain: MNFFNYFRSQKKKSAQVAKERLQVIVARERVHRDGPDYLPRLQEEILNVIRKYVQVDEDAVSIQLERDGDCEVLELNVTLPEHKA.

Belongs to the MinE family.

Prevents the cell division inhibition by proteins MinC and MinD at internal division sites while permitting inhibition at polar sites. This ensures cell division at the proper site by restricting the formation of a division septum at the midpoint of the long axis of the cell. This is Cell division topological specificity factor from Thioalkalivibrio sulfidiphilus (strain HL-EbGR7).